A 149-amino-acid polypeptide reads, in one-letter code: Putative eggshell protein (149 aa).

6 repeat units span residues tyrosine 1–lysine 5, tyrosine 6–lysine 10, tyrosine 11–lysine 15, tyrosine 16–lysine 20, tyrosine 21–lysine 25, and tyrosine 26–lysine 30. The segment at tyrosine 1–lysine 64 is 13 X 5 AA approximate tandem repeats of Y-G-Y-[DE]-K. A 7; truncated repeat occupies glycine 31–lysine 34. 3 tandem repeats follow at residues tyrosine 35–lysine 39, tyrosine 40–lysine 44, and tyrosine 45–lysine 49. The stretch at tyrosine 50 to lysine 54 is one 11; approximate repeat. Repeat 12 spans residues tyrosine 55 to lysine 59. The 13; approximate repeat unit spans residues tyrosine 60–lysine 64. A compositionally biased stretch (basic and acidic residues) spans tyrosine 105 to histidine 124. Residues tyrosine 105–tyrosine 149 form a disordered region. Positions aspartate 125–histidine 141 are enriched in basic residues.

This chain is Putative eggshell protein, found in Schistosoma mansoni (Blood fluke).